The chain runs to 366 residues: MGAETVTAILDTTLGVVFTWLGWKTAKIIRKYTPYSYPNARINAMEAKLLTGQRFNELAESRTLQNFIVNLEDTDYKVHLSGVTEDPLEIERAFERALASTYLLMEEILPKRVSGFFRLLLEEWDVRNIASVVKAKVRGEPAIDYVVEIGTMVPKVKAIAEAKTMEEILVILEGTPYEEHYQRLLLGEIDVDQFETELYKVYYSRLLEYATSRKEEERLILEEFVRTKIDIRNIVTLLRAKRAGLPGEVIKRHLIPGGSVKLDTALNVDDLGMALAELDSTKYGKVLRDEREKIEKDLTLVEPVLQNHLLRRMEELTRFYPLSVATPLSYILKKEREIKKLRAMAKLIADGFEPEKIKEIIGEELA.

This sequence belongs to the V-ATPase V0D/AC39 subunit family. Has multiple subunits with at least A(3), B(3), C, D, E, F, H, I and proteolipid K(x).

It is found in the cell membrane. Component of the A-type ATP synthase that produces ATP from ADP in the presence of a proton gradient across the membrane. The protein is A-type ATP synthase subunit C of Thermococcus gammatolerans (strain DSM 15229 / JCM 11827 / EJ3).